Here is a 292-residue protein sequence, read N- to C-terminus: Ribosomal protein L11 methyltransferase (292 aa).

S-adenosyl-L-methionine-binding residues include threonine 145, glycine 166, aspartate 188, and asparagine 229.

It belongs to the methyltransferase superfamily. PrmA family.

Its subcellular location is the cytoplasm. The catalysed reaction is L-lysyl-[protein] + 3 S-adenosyl-L-methionine = N(6),N(6),N(6)-trimethyl-L-lysyl-[protein] + 3 S-adenosyl-L-homocysteine + 3 H(+). Functionally, methylates ribosomal protein L11. The chain is Ribosomal protein L11 methyltransferase from Pseudoalteromonas atlantica (strain T6c / ATCC BAA-1087).